Here is a 365-residue protein sequence, read N- to C-terminus: 2-aminoethylphosphonate--pyruvate transaminase (365 aa).

Lys194 bears the N6-(pyridoxal phosphate)lysine mark.

Belongs to the class-V pyridoxal-phosphate-dependent aminotransferase family. PhnW subfamily. As to quaternary structure, homodimer. Pyridoxal 5'-phosphate serves as cofactor.

It carries out the reaction (2-aminoethyl)phosphonate + pyruvate = phosphonoacetaldehyde + L-alanine. Involved in phosphonate degradation. The polypeptide is 2-aminoethylphosphonate--pyruvate transaminase (Bacillus cereus (strain Q1)).